The following is a 1491-amino-acid chain: Pleckstrin homology domain-containing family H member 2 (1491 aa).

Residues 19-177 (ALEAQLMKFR…ELQEKKISCV (159 aa)) are a coiled coil. Disordered regions lie at residues 232-435 (AEKP…PFQP), 506-546 (DDGL…LHRF), and 612-668 (SSSP…SDYA). Residues 253–264 (TSCSSEQNQKTR) show a composition bias toward polar residues. Residues 374 to 385 (KEQDSSSDELNK) show a composition bias toward basic and acidic residues. Residues 392–406 (LDYTSSSSEANTPSP) are compositionally biased toward polar residues. Residues 657 to 666 (SDSSAASESD) show a composition bias toward low complexity. 2 consecutive PH domains span residues 702 to 796 (PLEK…SVLR) and 810 to 918 (KPAV…VAAG). One can recognise a MyTH4 domain in the interval 954-1109 (HSKEGILSPL…PSRMEILSTL (156 aa)). The FERM domain occupies 1120–1449 (FSIPVHFMNG…SYINSFHQQK (330 aa)). A disordered region spans residues 1466–1491 (QAPQARVMGSQPPLSNSRPTKGPTLL).

In terms of assembly, self-associates. Interacts with TGFB1I1. Expressed in the kidney and testis. Expressed in the kidney exclusively by glomerular podocytes.

The protein resides in the cytoplasm. The protein localises to the cytoskeleton. It localises to the cell membrane. Its subcellular location is the cell projection. It is found in the lamellipodium. Functionally, in the kidney glomerulus may play a role in linking podocyte foot processes to the glomerular basement membrane. May be involved in stabilization of F-actin by attenuating its depolymerization. Can recruit TGFB1I1 from focal adhesions to podocyte lamellipodia. The polypeptide is Pleckstrin homology domain-containing family H member 2 (Plekhh2) (Mus musculus (Mouse)).